Here is a 751-residue protein sequence, read N- to C-terminus: Semaphorin-3C (751 aa).

The signal sequence occupies residues 1–21 (MAFRTICVLVGVFICSICVKG). Residues 28 to 511 (RVYLTFDELR…SNEGVSQVSL (484 aa)) form the Sema domain. Residue Asn81 is glycosylated (N-linked (GlcNAc...) asparagine). Cys101 and Cys112 are oxidised to a cystine. Asn123 carries an N-linked (GlcNAc...) asparagine glycan. The cysteines at positions 130 and 139 are disulfide-linked. N-linked (GlcNAc...) asparagine glycans are attached at residues Asn252 and Asn268. Intrachain disulfides connect Cys266/Cys378 and Cys290/Cys338. Asn465 carries an N-linked (GlcNAc...) asparagine glycan. Cys514 and Cys532 form a disulfide bridge. Residues 571–655 (AYRNAAEIVQ…TENSFKQTIA (85 aa)) form the Ig-like C2-type domain. N-linked (GlcNAc...) asparagine glycans are attached at residues Asn585 and Asn586. Cysteines 592 and 643 form a disulfide. Residues 712 to 731 (TRQQHQQGDESQKMRGDYGK) show a composition bias toward basic and acidic residues. The disordered stretch occupies residues 712 to 751 (TRQQHQQGDESQKMRGDYGKLKALINSRKSRNRRNQLPES).

It belongs to the semaphorin family. As to quaternary structure, interacts with PLXND1.

The protein resides in the secreted. Binds to plexin family members and plays an important role in the regulation of developmental processes. Required for normal cardiovascular development during embryogenesis. Functions as attractant for growing axons, and thereby plays an important role in axon growth and axon guidance. The sequence is that of Semaphorin-3C (SEMA3C) from Pongo abelii (Sumatran orangutan).